The chain runs to 454 residues: Phosphoglucosamine mutase (454 aa).

Catalysis depends on serine 102, which acts as the Phosphoserine intermediate. Mg(2+)-binding residues include serine 102, aspartate 247, aspartate 249, and aspartate 251. A Phosphoserine modification is found at serine 102.

Belongs to the phosphohexose mutase family. Mg(2+) serves as cofactor. Activated by phosphorylation.

It carries out the reaction alpha-D-glucosamine 1-phosphate = D-glucosamine 6-phosphate. Functionally, catalyzes the conversion of glucosamine-6-phosphate to glucosamine-1-phosphate. The protein is Phosphoglucosamine mutase of Kineococcus radiotolerans (strain ATCC BAA-149 / DSM 14245 / SRS30216).